Reading from the N-terminus, the 172-residue chain is Probable phosphatase YqeG (172 aa).

Has low dephosphorylation activity on GMP and glucose-6-phosphate. The protein is Probable phosphatase YqeG (yqeG) of Bacillus subtilis (strain 168).